The primary structure comprises 343 residues: Heat-inducible transcription repressor HrcA (343 aa).

It belongs to the HrcA family.

Functionally, negative regulator of class I heat shock genes (grpE-dnaK-dnaJ and groELS operons). Prevents heat-shock induction of these operons. The polypeptide is Heat-inducible transcription repressor HrcA (Mycobacterium leprae (strain Br4923)).